The following is a 305-amino-acid chain: MTNKVIVGSRKSKLAMAQTELVIASLEKIFPDIKFEIKNVITEGDRNRHVSLAKIGGKGVFVKEIEDELKDGTIDFAVHSLKDVMPILPEELVLGAFPKRVSPYDCLVSRKNLSSLNDLPKGARIGTNSLRRQGQLLSIRPDLKIIPIRGNIDTRLRKIDTEALDGIILAEAGLTRLNIDLSSYHVLDLQNYIMPAVGQGCLAIECRKNDTRIRKMLDQINDEESAYCVQVEREFMRELGGSCNFPIGGHAYAKNGQILFDGLIASPNGEHVIKETKIPANNSGVGKKVADQLLAKDKFGIIEGE.

Cys-243 is subject to S-(dipyrrolylmethanemethyl)cysteine.

The protein belongs to the HMBS family. In terms of assembly, monomer. It depends on dipyrromethane as a cofactor.

It carries out the reaction 4 porphobilinogen + H2O = hydroxymethylbilane + 4 NH4(+). Its pathway is porphyrin-containing compound metabolism; protoporphyrin-IX biosynthesis; coproporphyrinogen-III from 5-aminolevulinate: step 2/4. Its function is as follows. Tetrapolymerization of the monopyrrole PBG into the hydroxymethylbilane pre-uroporphyrinogen in several discrete steps. The protein is Porphobilinogen deaminase of Limosilactobacillus reuteri (strain DSM 20016) (Lactobacillus reuteri).